The primary structure comprises 166 residues: NADPH-dependent 7-cyano-7-deazaguanine reductase (166 aa).

The active-site Thioimide intermediate is cysteine 57. Catalysis depends on aspartate 64, which acts as the Proton donor. Substrate contacts are provided by residues 79 to 81 (VES) and 98 to 99 (HE).

Belongs to the GTP cyclohydrolase I family. QueF type 1 subfamily.

It localises to the cytoplasm. It carries out the reaction 7-aminomethyl-7-carbaguanine + 2 NADP(+) = 7-cyano-7-deazaguanine + 2 NADPH + 3 H(+). It participates in tRNA modification; tRNA-queuosine biosynthesis. In terms of biological role, catalyzes the NADPH-dependent reduction of 7-cyano-7-deazaguanine (preQ0) to 7-aminomethyl-7-deazaguanine (preQ1). In Staphylococcus haemolyticus (strain JCSC1435), this protein is NADPH-dependent 7-cyano-7-deazaguanine reductase.